Reading from the N-terminus, the 145-residue chain is D-aminoacyl-tRNA deacylase (145 aa).

The short motif at 137–138 (GP) is the Gly-cisPro motif, important for rejection of L-amino acids element.

This sequence belongs to the DTD family. Homodimer.

It is found in the cytoplasm. The enzyme catalyses glycyl-tRNA(Ala) + H2O = tRNA(Ala) + glycine + H(+). The catalysed reaction is a D-aminoacyl-tRNA + H2O = a tRNA + a D-alpha-amino acid + H(+). An aminoacyl-tRNA editing enzyme that deacylates mischarged D-aminoacyl-tRNAs. Also deacylates mischarged glycyl-tRNA(Ala), protecting cells against glycine mischarging by AlaRS. Acts via tRNA-based rather than protein-based catalysis; rejects L-amino acids rather than detecting D-amino acids in the active site. By recycling D-aminoacyl-tRNA to D-amino acids and free tRNA molecules, this enzyme counteracts the toxicity associated with the formation of D-aminoacyl-tRNA entities in vivo and helps enforce protein L-homochirality. The protein is D-aminoacyl-tRNA deacylase of Psychromonas ingrahamii (strain DSM 17664 / CCUG 51855 / 37).